We begin with the raw amino-acid sequence, 383 residues long: Chaperone protein DnaJ (383 aa).

The J domain occupies 5 to 70 (DYYKTLGVTQ…KKRTAYDQYG (66 aa)). Residues 137 to 215 (GTIKEIKIPT…CHGNGRIEIS (79 aa)) form a CR-type zinc finger. Residues Cys-150, Cys-153, Cys-167, Cys-170, Cys-189, Cys-192, Cys-203, and Cys-206 each contribute to the Zn(2+) site. CXXCXGXG motif repeat units lie at residues 150-157 (CPTCYGYG), 167-174 (CPTCRGNG), 189-196 (CPQCHGEG), and 203-210 (CRRCHGNG).

It belongs to the DnaJ family. Homodimer. Zn(2+) serves as cofactor.

The protein localises to the cytoplasm. Its function is as follows. Participates actively in the response to hyperosmotic and heat shock by preventing the aggregation of stress-denatured proteins and by disaggregating proteins, also in an autonomous, DnaK-independent fashion. Unfolded proteins bind initially to DnaJ; upon interaction with the DnaJ-bound protein, DnaK hydrolyzes its bound ATP, resulting in the formation of a stable complex. GrpE releases ADP from DnaK; ATP binding to DnaK triggers the release of the substrate protein, thus completing the reaction cycle. Several rounds of ATP-dependent interactions between DnaJ, DnaK and GrpE are required for fully efficient folding. Also involved, together with DnaK and GrpE, in the DNA replication of plasmids through activation of initiation proteins. This chain is Chaperone protein DnaJ, found in Buchnera aphidicola subsp. Baizongia pistaciae (strain Bp).